Here is a 1161-residue protein sequence, read N- to C-terminus: Voltage-gated inwardly rectifying potassium channel KCNH2 (1161 aa).

At 1–405 the chain is on the cytoplasmic side; that stretch reads MPVRRGHVAP…RIHRWTILHY (405 aa). In terms of domain architecture, PAS spans 17-88; sequence TIIRKFEGQS…AAQIAQALLG (72 aa). The PAC domain maps to 92-144; sequence RKVEIAFYRKDGSCFLCLVDVVPVKNEDGAVIMFILNFEVVMEKDMVGSPARD. A disordered region spans residues 233–286; the sequence is ALVGSCSPPPPVSAPGPHPSLRAHSLNPDASGSSCSLARTRSRESCASVRRASS. A phosphoserine mark is found at Ser-239 and Ser-245. The segment covering 239-250 has biased composition (pro residues); sequence SPPPPVSAPGPH. The span at 260-271 shows a compositional bias: polar residues; sequence PDASGSSCSLAR. 4 positions are modified to phosphoserine: Ser-285, Ser-286, Ser-322, and Ser-353. A helical transmembrane segment spans residues 406 to 426; that stretch reads SPFKAVWDWLILLLVIYTAVF. Residues 427-452 are Extracellular-facing; the sequence is TPYSAAFLLKETEEGPPAPECGYACQ. A helical membrane pass occupies residues 453–473; that stretch reads PLAVVDLIVDIMFIVDILINF. The Cytoplasmic segment spans residues 474 to 497; that stretch reads RTTYVNANEEVVSHPGRIAVHYFK. The helical transmembrane segment at 498-518 threads the bilayer; sequence GWFLIDMVAAIPFDLLIFGSG. Over 519–522 the chain is Extracellular; sequence SEEL. The chain crosses the membrane as a helical; Voltage-sensor span at residues 523–543; the sequence is IGLLKTARLLRLVRVARKLDR. Residues 544–549 lie on the Cytoplasmic side of the membrane; the sequence is YSEYGA. A helical transmembrane segment spans residues 550 to 570; the sequence is AVLLLLMCTFALIAHWLACIW. The Extracellular portion of the chain corresponds to 571 to 613; sequence YAIGNMEQPHMDSRIGWLHNLGDQMGKPYNSSGLGGPSIKDKY. Residue Asn-600 is glycosylated (N-linked (GlcNAc...) asparagine). Positions 614–634 form an intramembrane region, pore-forming; that stretch reads VTGLYFTFSSLTSVGFGNVSP. A Selectivity filter motif is present at residues 626–631; that stretch reads SVGFGN. Over 635–640 the chain is Extracellular; the sequence is NTNSEK. The chain crosses the membrane as a helical span at residues 641 to 661; sequence IFSICVMLIGSLMYASIFGNV. The Cytoplasmic portion of the chain corresponds to 662 to 1161; that stretch reads SAIIQRLYSG…LHRHGSDPGS (500 aa). A cNMP-binding domain region spans residues 744–844; the sequence is PFRGATKDCL…IHRDDLLEVL (101 aa). Residues 872 to 985 are disordered; sequence GSPGSTEWEG…TEDCEKSSDT (114 aa). Residues Ser-873 and Ser-876 each carry the phosphoserine modification. Positions 885–894 are enriched in basic residues; it reads RQRKRKLSFR. A compositionally biased stretch (low complexity) spans 930–941; that stretch reads GESPSSGPSSPE. The segment covering 962 to 972 has biased composition (pro residues); the sequence is SPRPPGEPPGG. Arg-1016 is subject to Omega-N-methylarginine. A coiled-coil region spans residues 1037–1064; it reads RGDVESRLDALQRQLNRLETRLSADMAT. The tract at residues 1121 to 1161 is disordered; the sequence is ELPPGAPELPQEGPTRRLSLPGQLGALTSQPLHRHGSDPGS. Phosphoserine is present on Ser-1139.

Belongs to the potassium channel family. H (Eag) (TC 1.A.1.20) subfamily. Kv11.1/KCNH2 sub-subfamily. The potassium channel is probably composed of a homo- or heterotetrameric complex of pore-forming alpha subunits that can associate with modulating beta subunits. Interacts with DNAJB12 and DNAJB14; chaperones DNAJB12 and DNAJB14 promote tetramerization. Heteromultimer with KCNH6/ERG2 and KCNH7/ERG3. Interacts with ALG10B. Forms a stable complex with KCNE1 or KCNE2, and that this heteromultimerization regulates Inward rectifier potassium channel activity. Interacts with CANX. The core-glycosylated, but not the fully glycosylated form interacts with RNF207. Interacts with NDFIP1 and NDFIP2; this interaction decreases the cell membrane expression by targeting KCNH2, through interaction with NEDD4L, for the degradation through the multivesicular bodies (MVBs)-lysosomal pathway. In terms of processing, phosphorylated on serine and threonine residues. Phosphorylation by PKA inhibits ion conduction. As to expression, detected in heart, both in atrium and in left ventricle.

It localises to the cell membrane. It catalyses the reaction K(+)(in) = K(+)(out). Its function is as follows. Pore-forming (alpha) subunit of voltage-gated inwardly rectifying potassium channel. Characterized by unusual gating kinetics by producing relatively small outward currents during membrane depolarization and large inward currents during subsequent repolarization which reflect a rapid inactivation during depolarization and quick recovery from inactivation but slow deactivation (closing) during repolarization. Channel properties are modulated by cAMP and subunit assembly. Forms a stable complex with KCNE1 or KCNE2, and that this heteromultimerization regulates inward rectifier potassium channel activity. The sequence is that of Voltage-gated inwardly rectifying potassium channel KCNH2 from Oryctolagus cuniculus (Rabbit).